The sequence spans 148 residues: Deoxyuridine 5'-triphosphate nucleotidohydrolase (148 aa).

The protein belongs to the dUTPase family. Mg(2+) serves as cofactor.

The enzyme catalyses dUTP + H2O = dUMP + diphosphate + H(+). The protein operates within pyrimidine metabolism; dUMP biosynthesis; dUMP from dCTP (dUTP route): step 2/2. This enzyme decreases the intracellular concentration of dUTP so that uracil cannot be incorporated into viral progeny DNA. This activity is sufficient to exclude uracil from the DNA during phage replication. In the case of dUTPase mutant phages, the host dUTPase activity is not sufficient to exclude uracil from T5 DNA and uracil are incorporated, leading to decreased phage viability. This is Deoxyuridine 5'-triphosphate nucleotidohydrolase (DUT) from Escherichia coli (Enterobacteria phage T5).